The primary structure comprises 394 residues: 1-deoxy-D-xylulose 5-phosphate reductoisomerase (394 aa).

NADPH contacts are provided by Thr12, Gly13, Ser14, Ile15, Lys39, Gln40, and Asn126. Lys127 is a binding site for 1-deoxy-D-xylulose 5-phosphate. Glu128 lines the NADPH pocket. Asp152 provides a ligand contact to Mn(2+). Positions 153, 154, 183, and 206 each coordinate 1-deoxy-D-xylulose 5-phosphate. A Mn(2+)-binding site is contributed by Glu154. Gly212 is a binding site for NADPH. 1-deoxy-D-xylulose 5-phosphate is bound by residues Ser219, Asn224, Lys225, and Glu228. Residue Glu228 participates in Mn(2+) binding.

The protein belongs to the DXR family. Requires Mg(2+) as cofactor. Mn(2+) serves as cofactor.

It catalyses the reaction 2-C-methyl-D-erythritol 4-phosphate + NADP(+) = 1-deoxy-D-xylulose 5-phosphate + NADPH + H(+). The protein operates within isoprenoid biosynthesis; isopentenyl diphosphate biosynthesis via DXP pathway; isopentenyl diphosphate from 1-deoxy-D-xylulose 5-phosphate: step 1/6. Catalyzes the NADPH-dependent rearrangement and reduction of 1-deoxy-D-xylulose-5-phosphate (DXP) to 2-C-methyl-D-erythritol 4-phosphate (MEP). This is 1-deoxy-D-xylulose 5-phosphate reductoisomerase from Neisseria gonorrhoeae (strain ATCC 700825 / FA 1090).